A 440-amino-acid chain; its full sequence is Coenzyme A disulfide reductase (440 aa).

FAD is bound at residue 8–33; the sequence is GAVAGGATCASQIRRLDKDSEITIFE. 5 residues coordinate substrate: threonine 15, glutamine 19, arginine 22, serine 39, and asparagine 42. Residue cysteine 43 is the Nucleophile of the active site. Cysteine 43 (redox-active) is an active-site residue. Lysine 71 contributes to the substrate binding site. 151–166 serves as a coordination point for NADP(+); the sequence is ALVVGAGYISLEVLEN. Position 267–277 (267–277) interacts with FAD; the sequence is TNIPNIYALGD. Histidine 299 provides a ligand contact to substrate. Tyrosine 419 is a binding site for FAD. Lysine 427 serves as a coordination point for substrate.

The protein belongs to the class-III pyridine nucleotide-disulfide oxidoreductase family. As to quaternary structure, homodimer. Requires FAD as cofactor.

It carries out the reaction NADP(+) + 2 CoA = CoA-disulfide + NADPH + H(+). Functionally, catalyzes specifically the NADPH-dependent reduction of coenzyme A disulfide. The chain is Coenzyme A disulfide reductase from Staphylococcus haemolyticus (strain JCSC1435).